Reading from the N-terminus, the 95-residue chain is Protein TusB (95 aa).

Belongs to the DsrH/TusB family. Heterohexamer, formed by a dimer of trimers. The hexameric TusBCD complex contains 2 copies each of TusB, TusC and TusD. The TusBCD complex interacts with TusE.

The protein resides in the cytoplasm. Its function is as follows. Part of a sulfur-relay system required for 2-thiolation of 5-methylaminomethyl-2-thiouridine (mnm(5)s(2)U) at tRNA wobble positions. The protein is Protein TusB of Escherichia coli O139:H28 (strain E24377A / ETEC).